Reading from the N-terminus, the 31-residue chain is M-poneritoxin-Nc3b (31 aa).

The protein belongs to the ponericin-G family. In terms of tissue distribution, expressed by the venom gland.

Its subcellular location is the secreted. The protein resides in the target cell membrane. Membrane-perturbating peptide with a few moderate activities. It is insecticidal, since it induces reversible paralysis in insects (L.cuprina) after 1 hour, but fails to kill them. It is also antiparasitic, since it moderately inhibits the larval development of the major pathogenic nematode of ruminants (H.contortus, IC(50)=23.2 uM) and reduces the motility of adult males of the other nematode B.malayi. It does not show antibacterial activity (MIC&gt;40 uM). It is not cytotoxic to HEK293 cells and does not induce hemolysis in human erythrocytes. It does not cause an increase in intracellular calcium concentration on neuronal and epithelial cell lines. This chain is M-poneritoxin-Nc3b, found in Neoponera commutata (Large hunting ant).